We begin with the raw amino-acid sequence, 400 residues long: Glycine betaine/proline betaine transport system ATP-binding protein ProV (400 aa).

In terms of domain architecture, ABC transporter spans 29 to 265 (LSKEQILEKT…PANDYVRTFF (237 aa)). 61-68 (GLSGSGKS) contributes to the ATP binding site. 2 CBS domains span residues 282–341 (RTPN…GLDA) and 343–400 (LIDA…VNNG).

This sequence belongs to the ABC transporter superfamily. In terms of assembly, the complex is composed of two ATP-binding proteins (ProV), two transmembrane proteins (ProW) and a solute-binding protein (ProX).

The protein localises to the cell inner membrane. Part of the ProU ABC transporter complex involved in glycine betaine and proline betaine uptake. Probably responsible for energy coupling to the transport system. The polypeptide is Glycine betaine/proline betaine transport system ATP-binding protein ProV (Escherichia coli (strain K12)).